A 497-amino-acid polypeptide reads, in one-letter code: Galactose/methyl galactoside import ATP-binding protein MglA 1 (497 aa).

ABC transporter domains follow at residues Leu6–Asp243 and Gly256–Met494. Gly38 to Ser45 provides a ligand contact to ATP.

This sequence belongs to the ABC transporter superfamily. Galactose/methyl galactoside importer (TC 3.A.1.2.3) family. As to quaternary structure, the complex is composed of one ATP-binding protein (MglA), two transmembrane proteins (MglC) and a solute-binding protein (MglB).

The protein resides in the cell inner membrane. It catalyses the reaction D-galactose(out) + ATP + H2O = D-galactose(in) + ADP + phosphate + H(+). The enzyme catalyses methyl beta-D-galactoside(out) + ATP + H2O = methyl beta-D-galactoside(in) + ADP + phosphate + H(+). Its function is as follows. Part of the ABC transporter complex MglABC involved in galactose/methyl galactoside import. Responsible for energy coupling to the transport system. The protein is Galactose/methyl galactoside import ATP-binding protein MglA 1 of Photobacterium profundum (strain SS9).